Reading from the N-terminus, the 150-residue chain is MATVYDVPGDLLVERVAQRLKEIPEIKPPEWAPFVKTGRHKERLPEQEDWWYYRVASILRRVYIDGPVGIERLRTYYGGRKNRGHAPERFYKAGGSIIRKALQQLEAAGFIEKVPGKGRVVTPKGRSFLDKIATELKKELEEIIPELKKY.

It belongs to the eukaryotic ribosomal protein eS19 family. Part of the 30S ribosomal subunit.

May be involved in maturation of the 30S ribosomal subunit. This chain is Small ribosomal subunit protein eS19, found in Pyrococcus horikoshii (strain ATCC 700860 / DSM 12428 / JCM 9974 / NBRC 100139 / OT-3).